Consider the following 126-residue polypeptide: Major sperm protein 2 (126 aa).

At Ala2 the chain carries N-acetylalanine. The region spanning Asp8–Asn125 is the MSP domain.

In terms of tissue distribution, sperm.

Its subcellular location is the cell projection. It localises to the pseudopodium. The protein localises to the cytoplasm. It is found in the cytoskeleton. Its function is as follows. Central component in molecular interactions underlying sperm crawling. Forms an extensive filament system that extends from sperm villipoda, along the leading edge of the pseudopod. The chain is Major sperm protein 2 (MSP-2) from Globodera rostochiensis (Golden nematode worm).